A 146-amino-acid chain; its full sequence is Ribonuclease H (146 aa).

The RNase H type-1 domain maps to 1–143 (MKKQVTIYTD…CDQLAREAIK (143 aa)). The Mg(2+) site is built by aspartate 10, glutamate 48, aspartate 70, and aspartate 135.

The protein belongs to the RNase H family. As to quaternary structure, monomer. Mg(2+) serves as cofactor.

The protein resides in the cytoplasm. The catalysed reaction is Endonucleolytic cleavage to 5'-phosphomonoester.. Endonuclease that specifically degrades the RNA of RNA-DNA hybrids. The polypeptide is Ribonuclease H (Chlorobium chlorochromatii (strain CaD3)).